Reading from the N-terminus, the 25-residue chain is Fibrinolytic enzyme large subunit (25 aa).

The 25-residue stretch at 1–25 folds into the Peptidase S1 domain; the sequence is VIGGTNASPGEIPWQLSQQRQSGSW. Residues 1-25 form a disordered region; it reads VIGGTNASPGEIPWQLSQQRQSGSW. Positions 15–25 are enriched in polar residues; that stretch reads QLSQQRQSGSW.

It belongs to the peptidase S1 family. In terms of assembly, heterodimer of a large and a small subunit held together by hydrophobic interactions.

In terms of biological role, cleaves the carboxyl side of basic amino acids, small neutral amino acids, and Met residue. It is also a plasminogen activator. The protein is Fibrinolytic enzyme large subunit of Eisenia fetida (Red wiggler worm).